The primary structure comprises 150 residues: Ribosome maturation factor RimP (150 aa).

The protein belongs to the RimP family.

The protein resides in the cytoplasm. Required for maturation of 30S ribosomal subunits. This is Ribosome maturation factor RimP from Thermotoga maritima (strain ATCC 43589 / DSM 3109 / JCM 10099 / NBRC 100826 / MSB8).